The primary structure comprises 187 residues: Ribosome-recycling factor (187 aa).

It belongs to the RRF family.

Its subcellular location is the cytoplasm. Its function is as follows. Responsible for the release of ribosomes from messenger RNA at the termination of protein biosynthesis. May increase the efficiency of translation by recycling ribosomes from one round of translation to another. This Orientia tsutsugamushi (strain Ikeda) (Rickettsia tsutsugamushi) protein is Ribosome-recycling factor.